The sequence spans 248 residues: tRNA (guanine-N(1)-)-methyltransferase (248 aa).

Residues G113 and 133-138 contribute to the S-adenosyl-L-methionine site; that span reads IGDFVL.

Belongs to the RNA methyltransferase TrmD family. Homodimer.

It is found in the cytoplasm. The enzyme catalyses guanosine(37) in tRNA + S-adenosyl-L-methionine = N(1)-methylguanosine(37) in tRNA + S-adenosyl-L-homocysteine + H(+). Functionally, specifically methylates guanosine-37 in various tRNAs. The polypeptide is tRNA (guanine-N(1)-)-methyltransferase (Dehalococcoides mccartyi (strain ATCC BAA-2100 / JCM 16839 / KCTC 5957 / BAV1)).